The sequence spans 96 residues: Toxin ParE1 (96 aa).

The protein belongs to the RelE toxin family. In terms of assembly, forms a ParD1(2)-ParE1(2) heterotetramer.

In terms of biological role, toxic component of a type II toxin-antitoxin (TA) system. Its toxic effect is neutralized by coexpression with cognate antitoxin ParD1 but no other ParD or RelB antitoxin. Low levels of wild-type toxin in the absence of antitoxin decreases the rate of cell growth, and results in death or loss of colony formation abilities and greatly elongated cells. Low levels of a mutant missing the last 4 residues leads to loss of cell division while cell elongation continues. The chain is Toxin ParE1 (parE1) from Caulobacter vibrioides (strain ATCC 19089 / CIP 103742 / CB 15) (Caulobacter crescentus).